The following is a 330-amino-acid chain: Cobalamin biosynthesis protein CobD (330 aa).

Helical transmembrane passes span 60-80, 153-173, 227-247, and 308-328; these read TLVI…PPIV, GIIA…LLGV, LGIV…WKIF, and IVLF…FVLT.

Belongs to the CobD/CbiB family.

The protein resides in the cell membrane. The protein operates within cofactor biosynthesis; adenosylcobalamin biosynthesis. Functionally, converts cobyric acid to cobinamide by the addition of aminopropanol on the F carboxylic group. The chain is Cobalamin biosynthesis protein CobD from Desulfotalea psychrophila (strain LSv54 / DSM 12343).